A 103-amino-acid chain; its full sequence is Acyl carrier protein (103 aa).

In terms of domain architecture, Carrier spans 14-89; sequence NIVSNIVQDI…EFIDFTLQTI (76 aa). An O-(pantetheine 4'-phosphoryl)serine modification is found at Ser49.

This sequence belongs to the acyl carrier protein (ACP) family. In terms of processing, 4'-phosphopantetheine is transferred from CoA to a specific serine of apo-ACP by AcpS. This modification is essential for activity because fatty acids are bound in thioester linkage to the sulfhydryl of the prosthetic group.

The protein localises to the plastid. The protein resides in the cyanelle. Its pathway is lipid metabolism; fatty acid biosynthesis. Functionally, carrier of the growing fatty acid chain in fatty acid biosynthesis. The polypeptide is Acyl carrier protein (Cyanophora paradoxa).